The following is an 865-amino-acid chain: Centrosomal protein of 97 kDa (865 aa).

8 LRR repeats span residues 37-58 (DIHTLILDKNQIIKLENLEKCK), 59-80 (RLIQLSVANNRLVRMMGVAKLT), 81-102 (LLRVLNLPHNSIGCVEGLKELV), 103-124 (HLEWLNLAGNNLKAMEQINSCT), 125-146 (ALQHLDLSDNNISQIGDLSKLV), 147-168 (SLKTLLLHGNIITSLRMAPAYL), 171-192 (SLAILSLAENEIRDLNEISFLA), and 196-205 (ELEQLSIMNN). The region spanning 211–249 (TPSIPGFDYRPYIVSWCLNLRVLDGYVISQKESLKAEWL) is the LRRCT domain. The CCP110-binding stretch occupies residues 300–750 (HQRQLMNQSQ…RYGKESDLGD (451 aa)). Phosphoserine is present on residues Ser308, Ser413, and Ser500. Residues 506–529 (ESTEQKQSDIKKPENTQPENKETI) are disordered. Residues 508–527 (TEQKQSDIKKPENTQPENKE) are compositionally biased toward basic and acidic residues. Position 530 is a phosphoserine (Ser530). Thr542 carries the phosphothreonine modification. In terms of domain architecture, IQ spans 558 to 587 (LNDAATKLQACWRGFYARNYNPQAKDVRYE). An interaction with MPHOSPH9 region spans residues 587 to 865 (EIRLRRMQEH…FQLLHVGVTV (279 aa)). Residues 715–769 (QHSLDFEKSSTEGSESSIMGNSIDTVRYGKESDLGDVSEEHGEWNKESSNNEQDN) are disordered. Polar residues predominate over residues 725-738 (TEGSESSIMGNSID). Basic and acidic residues predominate over residues 741–760 (RYGKESDLGDVSEEHGEWNK). Ser763 bears the Phosphoserine mark.

As to quaternary structure, interacts with CALM1, CEP76, KIF24 and TALPID3. Interacts with CCP110. ENKD1 competes with CEP97 for binding to CCP110, destabilizing the interaction between CP110 and CEP97 which promotes the removal of CCP110 and CEP97 from the mother centriole and allows the initiation of ciliogenesis. Via its interaction with CCP110, may indirectly interact with HERC2 and NEURL4. Interacts with MPHOSPH9.

The protein localises to the cytoplasm. The protein resides in the cytoskeleton. Its subcellular location is the microtubule organizing center. It localises to the centrosome. It is found in the centriole. Functionally, acts as a key negative regulator of ciliogenesis in collaboration with CCP110 by capping the mother centriole thereby preventing cilia formation. Required for recruitment of CCP110 to the centrosome. The protein is Centrosomal protein of 97 kDa (CEP97) of Homo sapiens (Human).